A 185-amino-acid chain; its full sequence is NEDD8-conjugating enzyme UBE2F (185 aa).

Position 1 is an N-acetylmethionine (Met1). Residues 32 to 185 (VRDKLLVKEV…VDEYIKRYAR (154 aa)) form the UBC core domain. Catalysis depends on Cys116, which acts as the Glycyl thioester intermediate.

The protein belongs to the ubiquitin-conjugating enzyme family. UBE2F subfamily. As to quaternary structure, interacts with UBA3 and RBX2. Interacts (N-terminally acetylated form) with (via DCUN1 domain) DCUN1D1, DCUN1D2, DCUN1D3, DCUN1D4 and DCUN1D5. The acetylation of Met-1 increases affinity for DCUN1D3 by about 2 orders of magnitude and is crucial for NEDD8 transfer to cullins.

The catalysed reaction is [E1 NEDD8-activating enzyme]-S-[NEDD8 protein]-yl-L-cysteine + [E2 NEDD8-conjugating enzyme]-L-cysteine = [E1 NEDD8-activating enzyme]-L-cysteine + [E2 NEDD8-conjugating enzyme]-S-[NEDD8-protein]-yl-L-cysteine.. Its pathway is protein modification; protein neddylation. Its function is as follows. Accepts the ubiquitin-like protein NEDD8 from the UBA3-NAE1 E1 complex and catalyzes its covalent attachment to other proteins. Together with the E3 ubiquitin ligase RNF7/RBX2, specifically neddylates cullin-5 (CUL5). Does not neddylate CUL1, CUL2, CUL3, CUL4A or CUL4B. Mediates neddylation of the CUL9-RBX1 complex. This chain is NEDD8-conjugating enzyme UBE2F (Ube2f), found in Rattus norvegicus (Rat).